Here is a 331-residue protein sequence, read N- to C-terminus: Vitamin B12 import system permease protein BtuC (331 aa).

7 helical membrane passes run 21–43 (LALL…ERWI), 63–85 (PRTL…MQAV), 90–112 (LAEP…TVLL), 116–138 (LLPV…FLLL), 151–173 (LLIG…YFST), 193–210 (WRHG…LWLS), and 239–261 (VLVL…IAFI).

It belongs to the binding-protein-dependent transport system permease family. FecCD subfamily. As to quaternary structure, the complex is composed of two ATP-binding proteins (BtuD), two transmembrane proteins (BtuC) and a solute-binding protein (BtuF).

It localises to the cell inner membrane. Functionally, part of the ABC transporter complex BtuCDF involved in vitamin B12 import. Involved in the translocation of the substrate across the membrane. The chain is Vitamin B12 import system permease protein BtuC from Pectobacterium atrosepticum (strain SCRI 1043 / ATCC BAA-672) (Erwinia carotovora subsp. atroseptica).